The primary structure comprises 315 residues: NADH-cytochrome b5 reductase-like (315 aa).

Positions 19–55 constitute an Oxidoreductase-like domain; sequence RPTEPLPSQCCGSGCSPCVFDLYHRDLARWEAAQASK. The FAD-binding FR-type domain occupies 75–177; it reads ETFVAFCIIA…RGPFGDFFYK (103 aa). FAD contacts are provided by residues 157-172 and 182-214; these read ESWR…GPFG and GELL…TFVT.

The protein belongs to the flavoprotein pyridine nucleotide cytochrome reductase family. The cofactor is FAD.

It catalyses the reaction 2 Fe(III)-[cytochrome b5] + NADH = 2 Fe(II)-[cytochrome b5] + NAD(+) + H(+). NADH-cytochrome b5 reductases are involved in desaturation and elongation of fatty acids, cholesterol biosynthesis, drug metabolism, and, in erythrocyte, methemoglobin reduction. The protein is NADH-cytochrome b5 reductase-like (CYB5RL) of Homo sapiens (Human).